Consider the following 542-residue polypeptide: MPNVVDPPQISFAAKDMDLTEWEGDILAVLVTETDVSKATSSSSRFTNAAAALAKLDGELGGLLSEASAEEEFAGRAGQSVALRLPTAPGLHGFKRVCLVGVGNNMPSSAAACRSTGETIAAVAKSAQARSAAVALASPPPGWVQGEDLRLNAAAAVASGVVLGLHEDRRYKSDSKKVHLKQVDLIGFGSGQEMGRKLQYANHVSSAVIFAKELVNSPANVLTPAVLAEEASNIASSYSDVLTATILDEEKCRELKMGSYLAVAAASANPPHFIHLCYKPPGGNVKRKLAIVGKGLTFDRFYLSLDNLLIVTKFVCIGGYNIKIGAVTTIELMKKDMGGSAALFGAAKALGQIKPPGVEVHFISAACENMISGTGMRPGDIVTASNGKTIEVDNTDAEGRLTLADALVYACKLGVDKIIDLATLTGYCRIALGPSIAGILTPSDELDKEVAAAYEASGEKFWRLPLEESYWEQMKSSVADMLNTGSPLGGAITAGLFLKQFVDEKVKWMHVDMAGPVWNYKKQEATGFGVSTLVEWVLINSS.

The Mn(2+) site is built by Lys-294 and Asp-299. Lys-323 is an active-site residue. 3 residues coordinate Mn(2+): Asp-336, Asp-396, and Glu-398. Arg-400 is a catalytic residue.

This sequence belongs to the peptidase M17 family. In terms of assembly, homohexamer (dimer of homotrimers). Mn(2+) is required as a cofactor.

Its subcellular location is the cytoplasm. The enzyme catalyses Release of an N-terminal amino acid, Xaa-|-Yaa-, in which Xaa is preferably Leu, but may be other amino acids including Pro although not Arg or Lys, and Yaa may be Pro. Amino acid amides and methyl esters are also readily hydrolyzed, but rates on arylamides are exceedingly low.. It carries out the reaction Release of N-terminal proline from a peptide.. Its function is as follows. Presumably involved in the processing and regular turnover of intracellular proteins. Catalyzes the removal of unsubstituted N-terminal amino acids from various peptides. The sequence is that of Putative leucine aminopeptidase 1 from Oryza sativa subsp. japonica (Rice).